Here is a 358-residue protein sequence, read N- to C-terminus: Bi-functional coumaroyl CoA and feruloyl CoA ortho-hydroxylase F6H2-2-1 (358 aa).

A Fe2OG dioxygenase domain is found at 200-308 (SKESLLMGSR…RISVPVFVNP (109 aa)). A 2-oxoglutarate-binding site is contributed by Y216. Residues H231, D233, and H289 each contribute to the Fe cation site. 2 residues coordinate 2-oxoglutarate: R299 and S301.

It belongs to the iron/ascorbate-dependent oxidoreductase family. It depends on L-ascorbate as a cofactor. Fe(2+) serves as cofactor. In terms of tissue distribution, mostly expressed in underground stems and stems.

It catalyses the reaction (E)-4-coumaroyl-CoA + 2-oxoglutarate + O2 = (E)-2,4-dihydroxycinnamoyl-CoA + succinate + CO2. It carries out the reaction (E)-feruloyl-CoA + 2-oxoglutarate + O2 = (E)-6-hydroxyferuloyl-CoA + succinate + CO2. The protein operates within phenylpropanoid metabolism. 2-oxoglutarate (OG)- and Fe(II)-dependent dioxygenase (2OGD) involved in scopoletin and umbelliferone biosynthesis. Converts feruloyl CoA into 6'-hydroxyferuloyl CoA, and p-coumaroyl CoA into 2,4-dihydroxycinnamoyl-CoA, but has no activity toward caffeoyl-CoA. This Ipomoea batatas (Sweet potato) protein is Bi-functional coumaroyl CoA and feruloyl CoA ortho-hydroxylase F6H2-2-1.